A 107-amino-acid polypeptide reads, in one-letter code: MSEVLHINDADFESVVVNSDIPILLDFWAPWCGPCKMIAPVLDELAPEFAGKVKIVKMNVDDNQATPAQFGVRSIPTLLLIKNGQVVATQVGALPKTQLANFINQHI.

Positions 2-107 (SEVLHINDAD…QLANFINQHI (106 aa)) constitute a Thioredoxin domain. A disulfide bond links Cys32 and Cys35.

The protein belongs to the thioredoxin family.

Participates in various redox reactions through the reversible oxidation of its active center dithiol to a disulfide and catalyzes dithiol-disulfide exchange reactions. The polypeptide is Thioredoxin (trxA) (Haemophilus influenzae (strain ATCC 51907 / DSM 11121 / KW20 / Rd)).